The chain runs to 1942 residues: Myosin-1 (1942 aa).

One can recognise a Myosin N-terminal SH3-like domain in the interval 33–82; it reads DAKSSVFVVDAKESFVKATVQSREGGKVTAKTEGGTTVTVKDDQVYPMNP. Phosphoserine is present on Ser36. Residues Thr64 and Thr69 each carry the phosphothreonine modification. The Myosin motor domain maps to 86-785; that stretch reads DKIEDMAMMT…LLGLLEEMRD (700 aa). An N6,N6,N6-trimethyllysine modification is found at Lys130. 179–186 provides a ligand contact to ATP; sequence GESGAGKT. A Phosphotyrosine modification is found at Tyr389. Phosphothreonine is present on Thr419. Tyr424 carries the post-translational modification Phosphotyrosine. Position 625 is a phosphoserine (Ser625). Residues 662–684 are actin-binding; sequence LNKLMTNLRSTHPHFVRCIIPNE. A Pros-methylhistidine modification is found at His760. Residues 764–778 are actin-binding; sequence KFGHTKVFFKAGLLG. In terms of domain architecture, IQ spans 788-817; sequence LAQLITRTQAMCRGYLARVEYQKMVERRES. A coiled-coil region spans residues 846–1942; it reads LLKSAETEKE…EVHTKIISEE (1097 aa). 5 positions are modified to phosphoserine: Ser1095, Ser1099, Ser1165, Ser1240, and Ser1246. Positions 1156-1175 are disordered; it reads RLEEAGGATSAQIEMNKKRE. Residue Thr1258 is modified to Phosphothreonine. Ser1264 bears the Phosphoserine mark. A phosphothreonine mark is found at Thr1268 and Thr1289. A phosphoserine mark is found at Ser1291, Ser1295, Ser1306, and Ser1309. Position 1467 is a phosphotyrosine (Tyr1467). Thr1470 is modified (phosphothreonine). Position 1477 is a phosphoserine (Ser1477). A Phosphotyrosine modification is found at Tyr1495. Residue Ser1498 is modified to Phosphoserine. A Phosphothreonine modification is found at Thr1504. At Ser1517 the chain carries Phosphoserine. A Phosphothreonine modification is found at Thr1520. Phosphoserine is present on residues Ser1545, Ser1557, Ser1577, Ser1603, Ser1606, Ser1717, and Ser1729. Phosphothreonine is present on residues Thr1733 and Thr1739. Ser1742 is modified (phosphoserine).

The protein belongs to the TRAFAC class myosin-kinesin ATPase superfamily. Myosin family. Muscle myosin is a hexameric protein that consists of 2 heavy chain subunits (MHC), 2 alkali light chain subunits (MLC) and 2 regulatory light chain subunits (MLC-2). Interacts with SLC26A5. As to expression, expressed in the cochlea (at protein level). Strongly expressed in spiral ganglion neurons with axonal sprouts and supporting cells around hair cells. In the organ of Corti, it is expressed in inner and outer hair cells, and in supporting cells.

Its subcellular location is the cytoplasm. The protein localises to the myofibril. In terms of biological role, required for normal hearing. It plays a role in cochlear amplification of auditory stimuli, likely through the positive regulation of prestin (SLC26A5) activity and outer hair cell (OHC) electromotility. The chain is Myosin-1 from Mus musculus (Mouse).